We begin with the raw amino-acid sequence, 468 residues long: Argininosuccinate lyase (468 aa).

This sequence belongs to the lyase 1 family. Argininosuccinate lyase subfamily.

The protein localises to the cytoplasm. It carries out the reaction 2-(N(omega)-L-arginino)succinate = fumarate + L-arginine. It participates in amino-acid biosynthesis; L-arginine biosynthesis; L-arginine from L-ornithine and carbamoyl phosphate: step 3/3. The polypeptide is Argininosuccinate lyase (Gloeobacter violaceus (strain ATCC 29082 / PCC 7421)).